We begin with the raw amino-acid sequence, 350 residues long: Very-long-chain 3-oxoacyl-CoA reductase (350 aa).

The helical transmembrane segment at 28–48 (SLVLLAGIGALSVGTFALRLV) threads the bilayer. Residues Val79, Asp134, Asn161, Lys196, Tyr228, Lys232, Val261, and Ser263 each contribute to the NADP(+) site. The active-site Proton donor is Tyr228. Lys232 acts as the Lowers pKa of active site Tyr in catalysis.

It belongs to the short-chain dehydrogenases/reductases (SDR) family.

The protein localises to the endoplasmic reticulum membrane. It catalyses the reaction a very-long-chain (3R)-3-hydroxyacyl-CoA + NADP(+) = a very-long-chain 3-oxoacyl-CoA + NADPH + H(+). The protein operates within lipid metabolism; fatty acid biosynthesis. Component of the microsomal membrane bound fatty acid elongation system, which produces the 26-carbon very long-chain fatty acids (VLCFA) from palmitate. Catalyzes the reduction of the 3-ketoacyl-CoA intermediate that is formed in each cycle of fatty acid elongation. VLCFAs serve as precursors for ceramide and sphingolipids. The protein is Very-long-chain 3-oxoacyl-CoA reductase of Mycosarcoma maydis (Corn smut fungus).